The chain runs to 442 residues: C4-dicarboxylate transport protein (442 aa).

8 helical membrane passes run 10 to 30, 40 to 60, 77 to 97, 149 to 169, 185 to 205, 221 to 241, 288 to 308, and 354 to 374; these read VQVLIAIVLGILVGFLFPSFG, FIKLIKMLIAPIIFATVVSGI, LIYFEVVTTFALVIGLVVANI, LLQVLLISVLFGFALTQLGTL, FVILGFVMRLAPIGAFGAMAF, LMVAFYATCLLFVFVVLGLIA, VVGLVVPAGYSFNLDGTSIYL, and AATLSAVGHVPVAGLALILGI. The tract at residues 420 to 442 is disordered; it reads PATPEVAAEERGEGRGLDGPLPA.

The protein belongs to the dicarboxylate/amino acid:cation symporter (DAACS) (TC 2.A.23) family.

It is found in the cell membrane. In terms of biological role, responsible for the transport of dicarboxylates such as succinate, fumarate, and malate across the membrane. This Deinococcus geothermalis (strain DSM 11300 / CIP 105573 / AG-3a) protein is C4-dicarboxylate transport protein.